Here is a 148-residue protein sequence, read N- to C-terminus: Aspartate carbamoyltransferase regulatory chain (148 aa).

Zn(2+) contacts are provided by Cys106, Cys111, Cys134, and Cys137.

Belongs to the PyrI family. Contains catalytic and regulatory chains. Zn(2+) is required as a cofactor.

Its function is as follows. Involved in allosteric regulation of aspartate carbamoyltransferase. In Methanococcus vannielii (strain ATCC 35089 / DSM 1224 / JCM 13029 / OCM 148 / SB), this protein is Aspartate carbamoyltransferase regulatory chain.